The primary structure comprises 361 residues: Chorismate synthase (361 aa).

The NADP(+) site is built by Arg-48 and Arg-54. FMN-binding positions include 125–127 (RSS), 238–239 (NA), Gly-278, 293–297 (KPTSS), and Arg-319.

Belongs to the chorismate synthase family. In terms of assembly, homotetramer. It depends on FMNH2 as a cofactor.

The enzyme catalyses 5-O-(1-carboxyvinyl)-3-phosphoshikimate = chorismate + phosphate. It participates in metabolic intermediate biosynthesis; chorismate biosynthesis; chorismate from D-erythrose 4-phosphate and phosphoenolpyruvate: step 7/7. In terms of biological role, catalyzes the anti-1,4-elimination of the C-3 phosphate and the C-6 proR hydrogen from 5-enolpyruvylshikimate-3-phosphate (EPSP) to yield chorismate, which is the branch point compound that serves as the starting substrate for the three terminal pathways of aromatic amino acid biosynthesis. This reaction introduces a second double bond into the aromatic ring system. This chain is Chorismate synthase, found in Vibrio vulnificus (strain CMCP6).